We begin with the raw amino-acid sequence, 66 residues long: Large ribosomal subunit protein bL32 (66 aa).

It belongs to the bacterial ribosomal protein bL32 family.

The sequence is that of Large ribosomal subunit protein bL32 from Rickettsia conorii (strain ATCC VR-613 / Malish 7).